A 691-amino-acid chain; its full sequence is Methionine--tRNA ligase (691 aa).

The 'HIGH' region signature appears at 15-25 (PYTNGPIHIGH). Cys-147, Cys-150, Cys-160, and Cys-163 together coordinate Zn(2+). The short motif at 336 to 340 (KLSTS) is the 'KMSKS' region element. Thr-339 contacts ATP. A tRNA-binding domain is found at 589–691 (DFTKMDLRVG…DGVKAGTTIN (103 aa)).

The protein belongs to the class-I aminoacyl-tRNA synthetase family. MetG type 1 subfamily. As to quaternary structure, homodimer. Requires Zn(2+) as cofactor.

It is found in the cytoplasm. The catalysed reaction is tRNA(Met) + L-methionine + ATP = L-methionyl-tRNA(Met) + AMP + diphosphate. Its function is as follows. Is required not only for elongation of protein synthesis but also for the initiation of all mRNA translation through initiator tRNA(fMet) aminoacylation. In Christiangramia forsetii (strain DSM 17595 / CGMCC 1.15422 / KT0803) (Gramella forsetii), this protein is Methionine--tRNA ligase.